The chain runs to 696 residues: Polyphosphate kinase (696 aa).

Asn45 contacts ATP. Arg373 and Arg403 together coordinate Mg(2+). The PLD phosphodiesterase domain maps to 428-462 (PGLKIHSKLLMISRREGDDIIRYAHIGTGNFHEKT). His433 acts as the Phosphohistidine intermediate in catalysis. 3 residues coordinate ATP: Tyr466, Arg562, and His590.

The protein belongs to the polyphosphate kinase 1 (PPK1) family. It depends on Mg(2+) as a cofactor. An intermediate of this reaction is the autophosphorylated ppk in which a phosphate is covalently linked to a histidine residue through a N-P bond.

The catalysed reaction is [phosphate](n) + ATP = [phosphate](n+1) + ADP. Its function is as follows. Catalyzes the reversible transfer of the terminal phosphate of ATP to form a long-chain polyphosphate (polyP). The polypeptide is Polyphosphate kinase (Vibrio parahaemolyticus serotype O3:K6 (strain RIMD 2210633)).